The chain runs to 452 residues: Lipase member H (452 aa).

Positions 1–16 are cleaved as a signal peptide; it reads MLRFYLFISLLCLVRS. 3 N-linked (GlcNAc...) asparagine glycosylation sites follow: asparagine 50, asparagine 66, and asparagine 122. The Nucleophile role is filled by serine 154. The active-site Charge relay system is the aspartate 178. A disulfide bond links cysteine 233 and cysteine 247. Catalysis depends on histidine 249, which acts as the Charge relay system. A glycan (N-linked (GlcNAc...) asparagine) is linked at asparagine 263. Intrachain disulfides connect cysteine 271/cysteine 282, cysteine 285/cysteine 293, and cysteine 428/cysteine 447.

The protein belongs to the AB hydrolase superfamily. Lipase family. In terms of assembly, interacts with TTMP/C3orf52. In terms of tissue distribution, expressed in liver and lacrimal gland.

It is found in the secreted. Its subcellular location is the cell membrane. It catalyses the reaction 1-hexadecanoyl-2-(9Z-octadecenoyl)-sn-glycero-3-phosphate + H2O = 2-(9Z-octadecenoyl)-sn-glycero-3-phosphate + hexadecanoate + H(+). Its function is as follows. Hydrolyzes specifically phosphatidic acid (PA) to produce 2-acyl lysophosphatidic acid (LPA; a potent bioactive lipid mediator) and fatty acid. Does not hydrolyze other phospholipids, like phosphatidylserine (PS), phosphatidylcholine (PC) and phosphatidylethanolamine (PE) or triacylglycerol (TG). This chain is Lipase member H (LIPH), found in Oryctolagus cuniculus (Rabbit).